The sequence spans 191 residues: Peptidyl-tRNA hydrolase (191 aa).

Tyr17 lines the tRNA pocket. His22 (proton acceptor) is an active-site residue. The tRNA site is built by Tyr68, Asn70, and Asn116.

This sequence belongs to the PTH family. Monomer.

Its subcellular location is the cytoplasm. It carries out the reaction an N-acyl-L-alpha-aminoacyl-tRNA + H2O = an N-acyl-L-amino acid + a tRNA + H(+). Hydrolyzes ribosome-free peptidyl-tRNAs (with 1 or more amino acids incorporated), which drop off the ribosome during protein synthesis, or as a result of ribosome stalling. Its function is as follows. Catalyzes the release of premature peptidyl moieties from peptidyl-tRNA molecules trapped in stalled 50S ribosomal subunits, and thus maintains levels of free tRNAs and 50S ribosomes. The chain is Peptidyl-tRNA hydrolase from Francisella tularensis subsp. mediasiatica (strain FSC147).